Reading from the N-terminus, the 216-residue chain is Ceramide-1-phosphate transfer protein (216 aa).

Positions 56, 60, 108, 112, and 152 each coordinate an N-acylsphingoid base 1-phosphate.

Belongs to the GLTP family.

It localises to the cytoplasm. It is found in the cytosol. Its subcellular location is the golgi apparatus. The protein localises to the trans-Golgi network membrane. The protein resides in the cell membrane. It localises to the endosome membrane. It is found in the nucleus outer membrane. It catalyses the reaction N-(hexadecanoyl)-sphing-4-enine-1-phosphate(in) = N-(hexadecanoyl)-sphing-4-enine-1-phosphate(out). The catalysed reaction is N-(9Z-octadecenoyl)-sphing-4-enine-1-phosphate(in) = N-(9Z-octadecenoyl)-sphing-4-enine-1-phosphate(out). In terms of biological role, mediates the intracellular transfer of ceramide-1-phosphate (C1P) between organelle membranes and the cell membrane. Required for normal structure of the Golgi stacks. Can bind phosphoceramides with a variety of aliphatic chains, but has a preference for lipids with saturated C16:0 or monounsaturated C18:1 aliphatic chains, and is inefficient with phosphoceramides containing lignoceryl (C24:0). Plays a role in the regulation of the cellular levels of ceramide-1-phosphate, and thereby contributes to the regulation of phospholipase PLA2G4A activity and the release of arachidonic acid. Has no activity with galactosylceramide, lactosylceramide, sphingomyelin, phosphatidylcholine, phosphatidic acid and ceramide. C1P transfer is stimulated by phosphatidylserine in C1P source vesicles. Regulates autophagy, inflammasome mediated IL1B and IL18 processing, and pyroptosis, but not apoptosis. The polypeptide is Ceramide-1-phosphate transfer protein (Mus musculus (Mouse)).